The sequence spans 295 residues: Calcium-regulated actin-bundling protein (295 aa).

In terms of assembly, monomer.

Functionally, may contribute to the structure and reorganization of filopodia and pseudopodia accompanying cell movements. The protein is Calcium-regulated actin-bundling protein (abpB) of Dictyostelium discoideum (Social amoeba).